Consider the following 337-residue polypeptide: Casein kinase I isoform alpha (337 aa).

N-acetylalanine is present on Ala-2. Position 4 is a phosphoserine (Ser-4). Lys-8 carries the post-translational modification N6-acetyllysine. The Protein kinase domain maps to 17-285 (YKLVRKIGSG…YLRQLFRILF (269 aa)). ATP is bound by residues 23 to 31 (IGSGSFGDI) and Lys-46. Asp-136 functions as the Proton acceptor in the catalytic mechanism. Over residues 309-325 (AASSSGQGQQAQTPTGK) the composition is skewed to low complexity. Residues 309-337 (AASSSGQGQQAQTPTGKQTDKTKSNMKGF) form a disordered region.

This sequence belongs to the protein kinase superfamily. CK1 Ser/Thr protein kinase family. Casein kinase I subfamily. As to quaternary structure, interacts with the Axin complex. Interacts with TUT1, leading to TUT1 phosphorylation. Interacts with FAM83A, FAM83B, FAM83C, FAM83D, FAM83E, FAM83F, FAM83G and FAM83H (via DUF1669). Interaction with FAM83H recruits CSNK1A1 to keratin filaments. In terms of processing, phosphorylated by MTOR in response to mitogenic stimulation, leading to its activation.

Its subcellular location is the cytoplasm. The protein localises to the cytoskeleton. It is found in the microtubule organizing center. It localises to the centrosome. The protein resides in the chromosome. Its subcellular location is the centromere. The protein localises to the kinetochore. It is found in the nucleus speckle. It localises to the cilium basal body. The protein resides in the spindle. The catalysed reaction is L-seryl-[protein] + ATP = O-phospho-L-seryl-[protein] + ADP + H(+). It carries out the reaction L-threonyl-[protein] + ATP = O-phospho-L-threonyl-[protein] + ADP + H(+). Casein kinases are operationally defined by their preferential utilization of acidic proteins such as caseins as substrates. Can phosphorylate a large number of proteins. Participates in Wnt signaling. Phosphorylates CTNNB1 at 'Ser-45'. May phosphorylate PER1 and PER2. May play a role in segregating chromosomes during mitosis. May play a role in keratin cytoskeleton disassembly and thereby, it may regulate epithelial cell migration. Acts as a positive regulator of mTORC1 and mTORC2 signaling in response to nutrients by mediating phosphorylation of DEPTOR inhibitor. Acts as an inhibitor of NLRP3 inflammasome assembly by mediating phosphorylation of NLRP3. This is Casein kinase I isoform alpha (Csnk1a1) from Mus musculus (Mouse).